Consider the following 200-residue polypeptide: MEQLPSNLQVLLQAAEYVERREREAEHGYASILPCDPATPGRRKRQRTNSNPDNVRSVHNELEKHRRAQLRRCLEQLKQQVPLSMENSRHTTLSLLHRAKQHIKKLEDQELRAKSLKEKLRADQQKLRQRLKRLLPPNTERIRTDSLDSSNLSSERSDSDQEDLEVDVEGIILSGNEGELFVSFSAGLEHSYSTPAHAWL.

Disordered regions lie at residues 31–56 and 133–164; these read SILP…DNVR and RLLP…QEDL. A bHLH domain is found at 54 to 106; that stretch reads NVRSVHNELEKHRRAQLRRCLEQLKQQVPLSMENSRHTTLSLLHRAKQHIKKL.

As to quaternary structure, efficient DNA binding requires dimerization with another bHLH protein. Binds DNA as a heterodimer with MAX. In terms of tissue distribution, expressed broadly throughout the CNS and the eye, starting at neurula stages.

The protein localises to the nucleus. Its function is as follows. Transcriptional repressor. Binds with MAX to form a sequence-specific DNA-binding protein complex which recognizes the core sequence 5'-CAC[GA]TG-3'. This chain is Max dimerization protein 3 (mxd3), found in Xenopus laevis (African clawed frog).